Here is an 856-residue protein sequence, read N- to C-terminus: Vomeronasal type-2 receptor 116 (856 aa).

The first 18 residues, 1 to 18 (MFTLIFLFLFLNIPLLVA), serve as a signal peptide directing secretion. The Extracellular portion of the chain corresponds to 19 to 586 (DFISPRCFWK…VFLSYEEPLG (568 aa)). Asparagine 94 is a glycosylation site (N-linked (GlcNAc...) asparagine). A helical transmembrane segment spans residues 587 to 607 (VALSLLSLCFSAFTTVVLGIF). Residues 608 to 622 (VKHHNTPIVKANNRT) are Cytoplasmic-facing. The chain crosses the membrane as a helical span at residues 623–643 (LTYLLLISLIFCFLCPLLFIG). Over 644-658 (HPNSATCILQQLTFG) the chain is Extracellular. A helical membrane pass occupies residues 659–679 (VVFTVSLSTVLAKTITVVLAF). Residues 680 to 690 (KIIASQRMMKY) lie on the Cytoplasmic side of the membrane. The chain crosses the membrane as a helical span at residues 691-711 (FLISGAINYIIPICILIQVIV). Residues 712–745 (CAVWLRASPPSVDIDAHSEHGQIIIVCHKGSVNA) are Extracellular-facing. A helical membrane pass occupies residues 746 to 766 (FYCVLGYLAILAFGSFTLAFL). Topologically, residues 767 to 778 (SRNLPGAFNEAK) are cytoplasmic. The helical transmembrane segment at 779-799 (SITFSMLVFCSVWVTFIPVYH) threads the bilayer. Residues 800–806 (STKGKVM) lie on the Extracellular side of the membrane. The chain crosses the membrane as a helical span at residues 807–827 (VAVEIFSTLASSAGMLGCIFV). Topologically, residues 828-856 (PKCYTILFRQDQNSLEMIRVKSSSNVHVS) are cytoplasmic.

Belongs to the G-protein coupled receptor 3 family. As to expression, expressed in the vomeronasal organ.

It is found in the cell membrane. Receptor for the Esp1 pheromone. Mediates the response to Esp1 which enhances female sexual receptive behavior (lordosis) upon male mounting, resulting in successful copulation. The protein is Vomeronasal type-2 receptor 116 of Mus musculus (Mouse).